Reading from the N-terminus, the 351-residue chain is Synaptonemal complex central element protein 1 (351 aa).

Over residues 1–10 the composition is skewed to polar residues; that stretch reads MAGRSLTSKA. 2 disordered regions span residues 1–31 and 267–351; these read MAGR…TSSQ and KCQQ…KELF. The stretch at 52–290 forms a coiled coil; sequence RVEVLINRIN…ELEKHGMQVP (239 aa).

It belongs to the SYCE family. In terms of assembly, homodimer. Found in a complex with SYCP1 and SYCE2. Interacts with SYCP1, SYCE2 and SYCE3. Interacts with SIX6OS1.

It localises to the nucleus. Its subcellular location is the chromosome. Its function is as follows. Major component of the transverse central element of synaptonemal complexes (SCS), formed between homologous chromosomes during meiotic prophase. Requires SYCP1 in order to be incorporated into the central element. May have a role in the synaptonemal complex assembly, stabilization and recombination. This Homo sapiens (Human) protein is Synaptonemal complex central element protein 1 (SYCE1).